The chain runs to 488 residues: Proline--tRNA ligase (488 aa).

The protein belongs to the class-II aminoacyl-tRNA synthetase family. ProS type 3 subfamily. As to quaternary structure, homodimer.

It is found in the cytoplasm. The catalysed reaction is tRNA(Pro) + L-proline + ATP = L-prolyl-tRNA(Pro) + AMP + diphosphate. Catalyzes the attachment of proline to tRNA(Pro) in a two-step reaction: proline is first activated by ATP to form Pro-AMP and then transferred to the acceptor end of tRNA(Pro). This Pyrobaculum aerophilum (strain ATCC 51768 / DSM 7523 / JCM 9630 / CIP 104966 / NBRC 100827 / IM2) protein is Proline--tRNA ligase.